The chain runs to 786 residues: Spermatogenesis-associated protein 20 (786 aa).

The N-terminal stretch at 1–22 is a signal peptide; the sequence is MLGARAWLGRVLLLPRAGAGLA. The segment at 23-61 is disordered; it reads ASRRGSSSRDKDRSATVSSSVPMPAGGKGSHPSSTPQRV. Position 649 is a phosphoserine (Ser-649).

The protein localises to the secreted. In terms of biological role, may play a role in fertility regulation. This chain is Spermatogenesis-associated protein 20 (SPATA20), found in Homo sapiens (Human).